The chain runs to 100 residues: Large ribosomal subunit protein bL21 (100 aa).

It belongs to the bacterial ribosomal protein bL21 family. Part of the 50S ribosomal subunit. Contacts protein L20.

Functionally, this protein binds to 23S rRNA in the presence of protein L20. The sequence is that of Large ribosomal subunit protein bL21 from Wolbachia sp. subsp. Drosophila simulans (strain wRi).